Here is a 205-residue protein sequence, read N- to C-terminus: Anaerobic dimethyl sulfoxide reductase chain B (205 aa).

3 4Fe-4S ferredoxin-type domains span residues 5-33 (YGFF…LTPE), 59-89 (FAYY…KRED), and 90-119 (GFVV…YNET). Residues cysteine 14, cysteine 17, cysteine 20, cysteine 24, cysteine 67, cysteine 70, cysteine 75, cysteine 79, cysteine 99, cysteine 102, cysteine 105, cysteine 109, cysteine 126, cysteine 129, cysteine 141, and cysteine 145 each contribute to the [4Fe-4S] cluster site. A disordered region spans residues 184-205 (KPNANSRPTGDTTGYLANPKEV). Residues 186–195 (NANSRPTGDT) are compositionally biased toward polar residues.

Heterotrimeric enzyme composed of a catalytic heterodimer (DmsAB) and a membrane anchor protein (DmsC). [4Fe-4S] cluster is required as a cofactor.

Functionally, electron transfer subunit of the terminal reductase during anaerobic growth on various sulfoxide and N-oxide compounds. The chain is Anaerobic dimethyl sulfoxide reductase chain B (dmsB) from Escherichia coli (strain K12).